The primary structure comprises 418 residues: Tyrosine--tRNA ligase 1 (418 aa).

Tyr34 contributes to the L-tyrosine binding site. The 'HIGH' region motif lies at 39–48 (PTGDSMHIGH). 2 residues coordinate L-tyrosine: Tyr166 and Gln170. A 'KMSKS' region motif is present at residues 228 to 232 (KFGKT). Lys231 serves as a coordination point for ATP. Positions 350–416 (KNIVDWLVDT…GKKNYFLAKV (67 aa)) constitute an S4 RNA-binding domain.

This sequence belongs to the class-I aminoacyl-tRNA synthetase family. TyrS type 1 subfamily. In terms of assembly, homodimer.

It is found in the cytoplasm. It carries out the reaction tRNA(Tyr) + L-tyrosine + ATP = L-tyrosyl-tRNA(Tyr) + AMP + diphosphate + H(+). Functionally, catalyzes the attachment of tyrosine to tRNA(Tyr) in a two-step reaction: tyrosine is first activated by ATP to form Tyr-AMP and then transferred to the acceptor end of tRNA(Tyr). The protein is Tyrosine--tRNA ligase 1 of Enterococcus faecalis (strain ATCC 700802 / V583).